The sequence spans 638 residues: Factor of DNA methylation 3 (638 aa).

The stretch at 318 to 497 forms a coiled coil; it reads FNRIFADHEK…RALISNLRDM (180 aa).

Functionally, acts in association with FDM4 and FDM5 for RNA-directed DNA methylation (RdDM). The chain is Factor of DNA methylation 3 from Arabidopsis thaliana (Mouse-ear cress).